A 481-amino-acid chain; its full sequence is uncharacterized protein (481 aa).

It belongs to the metallophosphoesterase superfamily.

This is an uncharacterized protein from Bacillus subtilis (strain 168).